The primary structure comprises 290 residues: 4-diphosphocytidyl-2-C-methyl-D-erythritol kinase (290 aa).

The active site involves K13. 93–103 (PVQAGLGGGSA) lines the ATP pocket. The active site involves D135.

It belongs to the GHMP kinase family. IspE subfamily.

It carries out the reaction 4-CDP-2-C-methyl-D-erythritol + ATP = 4-CDP-2-C-methyl-D-erythritol 2-phosphate + ADP + H(+). It functions in the pathway isoprenoid biosynthesis; isopentenyl diphosphate biosynthesis via DXP pathway; isopentenyl diphosphate from 1-deoxy-D-xylulose 5-phosphate: step 3/6. Functionally, catalyzes the phosphorylation of the position 2 hydroxy group of 4-diphosphocytidyl-2C-methyl-D-erythritol. The chain is 4-diphosphocytidyl-2-C-methyl-D-erythritol kinase from Desulfitobacterium hafniense (strain Y51).